The sequence spans 201 residues: Molybdenum cofactor guanylyltransferase (201 aa).

GTP is bound by residues 15–17, lysine 28, aspartate 74, and aspartate 104; that span reads LCG. Aspartate 104 is a Mg(2+) binding site.

It belongs to the MobA family. In terms of assembly, monomer. Mg(2+) serves as cofactor.

It is found in the cytoplasm. The enzyme catalyses Mo-molybdopterin + GTP + H(+) = Mo-molybdopterin guanine dinucleotide + diphosphate. In terms of biological role, transfers a GMP moiety from GTP to Mo-molybdopterin (Mo-MPT) cofactor (Moco or molybdenum cofactor) to form Mo-molybdopterin guanine dinucleotide (Mo-MGD) cofactor. The chain is Molybdenum cofactor guanylyltransferase from Ectopseudomonas mendocina (strain ymp) (Pseudomonas mendocina).